We begin with the raw amino-acid sequence, 98 residues long: NADH-ubiquinone oxidoreductase chain 4L (98 aa).

3 helical membrane passes run 1–21 (MSMV…GLLI), 30–50 (LLCL…TILT), and 61–81 (IILL…LVMI).

The protein belongs to the complex I subunit 4L family. As to quaternary structure, core subunit of respiratory chain NADH dehydrogenase (Complex I) which is composed of 45 different subunits.

It is found in the mitochondrion inner membrane. The enzyme catalyses a ubiquinone + NADH + 5 H(+)(in) = a ubiquinol + NAD(+) + 4 H(+)(out). In terms of biological role, core subunit of the mitochondrial membrane respiratory chain NADH dehydrogenase (Complex I) which catalyzes electron transfer from NADH through the respiratory chain, using ubiquinone as an electron acceptor. Part of the enzyme membrane arm which is embedded in the lipid bilayer and involved in proton translocation. This chain is NADH-ubiquinone oxidoreductase chain 4L (MT-ND4L), found in Martes americana (American marten).